We begin with the raw amino-acid sequence, 149 residues long: Large ribosomal subunit protein uL22c (149 aa).

Belongs to the universal ribosomal protein uL22 family. In terms of assembly, part of the 50S ribosomal subunit.

The protein localises to the plastid. It is found in the chloroplast. This protein binds specifically to 23S rRNA. In terms of biological role, the globular domain of the protein is located near the polypeptide exit tunnel on the outside of the subunit, while an extended beta-hairpin is found that lines the wall of the exit tunnel in the center of the 70S ribosome. The protein is Large ribosomal subunit protein uL22c (rpl22-A) of Pelargonium hortorum (Common geranium).